The primary structure comprises 595 residues: NADH-quinone oxidoreductase subunit C/D (595 aa).

The segment at 1-185 is NADH dehydrogenase I subunit C; the sequence is MNKNICLSAS…NPFVLTKEKE (185 aa). Residues 209–595 form an NADH dehydrogenase I subunit D region; that stretch reads DFMFLNFGPN…IDFVMSDVDR (387 aa).

This sequence in the N-terminal section; belongs to the complex I 30 kDa subunit family. It in the C-terminal section; belongs to the complex I 49 kDa subunit family. NDH-1 is composed of 13 different subunits. Subunits NuoB, CD, E, F, and G constitute the peripheral sector of the complex.

The protein localises to the cell inner membrane. The enzyme catalyses a quinone + NADH + 5 H(+)(in) = a quinol + NAD(+) + 4 H(+)(out). Its function is as follows. NDH-1 shuttles electrons from NADH, via FMN and iron-sulfur (Fe-S) centers, to quinones in the respiratory chain. The immediate electron acceptor for the enzyme in this species is believed to be ubiquinone. Couples the redox reaction to proton translocation (for every two electrons transferred, four hydrogen ions are translocated across the cytoplasmic membrane), and thus conserves the redox energy in a proton gradient. The polypeptide is NADH-quinone oxidoreductase subunit C/D (Baumannia cicadellinicola subsp. Homalodisca coagulata).